The sequence spans 245 residues: MRYIGKWMMLGALVSSSVFADVKVNIHRDVAPLVVNGEKVGFFISKKSVLDFDNGLNQLVVRVEKLIDNNQGEKEKFNSKPVIITFKASDRELDLFVDSVISRSKDAEEFELNPFFILKDKNGDPIQIMKQEILPNGGGITRDYETEVYRYNKKNNIIIASEKLSQSIAEQPIVEMEKGVEMVQYWYEKASNEDKKQFASLAFENRKSEIAKQNTKSQELDMLVYWFNQTSENGRKNIINWIMNN.

The signal sequence occupies residues 1-20 (MRYIGKWMMLGALVSSSVFA).

This sequence belongs to the UPF0319 family.

This chain is UPF0319 protein VV0984, found in Vibrio vulnificus (strain YJ016).